Consider the following 253-residue polypeptide: 1-(5-phosphoribosyl)-5-[(5-phosphoribosylamino)methylideneamino] imidazole-4-carboxamide isomerase (253 aa).

The active-site Proton acceptor is the Asp-8. Asp-131 acts as the Proton donor in catalysis.

The protein belongs to the HisA/HisF family.

It localises to the cytoplasm. It carries out the reaction 1-(5-phospho-beta-D-ribosyl)-5-[(5-phospho-beta-D-ribosylamino)methylideneamino]imidazole-4-carboxamide = 5-[(5-phospho-1-deoxy-D-ribulos-1-ylimino)methylamino]-1-(5-phospho-beta-D-ribosyl)imidazole-4-carboxamide. The protein operates within amino-acid biosynthesis; L-histidine biosynthesis; L-histidine from 5-phospho-alpha-D-ribose 1-diphosphate: step 4/9. This Polynucleobacter necessarius subsp. necessarius (strain STIR1) protein is 1-(5-phosphoribosyl)-5-[(5-phosphoribosylamino)methylideneamino] imidazole-4-carboxamide isomerase.